Consider the following 254-residue polypeptide: Receptor expression-enhancing protein 2 (254 aa).

A run of 2 helical transmembrane segments spans residues 1–21 (MVSWIISRLVVLIFGTLYPAY) and 35–55 (YVKWMMYWIVFAFFTTAETLT). Ser-152 carries the phosphoserine modification. The segment at 194 to 254 (LSLRSSTSQP…KKSSGGGDSA (61 aa)) is disordered. The span at 205–219 (PRTETSEDDLGDKAP) shows a compositional bias: basic and acidic residues.

Belongs to the DP1 family. Interacts with odorant receptor proteins.

It localises to the membrane. Its function is as follows. Required for endoplasmic reticulum (ER) network formation, shaping and remodeling. May enhance the cell surface expression of odorant receptors. This chain is Receptor expression-enhancing protein 2 (Reep2), found in Mus musculus (Mouse).